The following is a 95-amino-acid chain: UPF0381 protein HI_0400 (95 aa).

It belongs to the UPF0381 family.

This is UPF0381 protein HI_0400 from Haemophilus influenzae (strain ATCC 51907 / DSM 11121 / KW20 / Rd).